A 345-amino-acid chain; its full sequence is Histone H3-like centromeric protein cpar-1 (345 aa).

A disordered region spans residues 117–246; it reads NHSNRKPLEE…SRVTKTHNRK (130 aa). A compositionally biased stretch (basic and acidic residues) spans 122–149; it reads KPLEESRRREEPRDRVHESNIDITHRGD. The segment covering 233–246 has biased composition (basic residues); it reads RSGKSRVTKTHNRK. The interval 263 to 340 is H3-like; the sequence is STDMLIQKAP…TDIQLYRRLC (78 aa).

Belongs to the histone H3 family. In terms of assembly, forms a nucleosome-like histone octamer containing two molecules each of H2A, H2B, cpar-1 and H4 assembled in one cpar-1-H4 heterotetramer and two H2A-H2B heterodimers. Cleaved at the onset of meiotic anaphase I, likely by separase sep-1.

Its subcellular location is the nucleus. The protein resides in the chromosome. Histone H3-like variant which exclusively replaces conventional H3 in the nucleosome core of centromeric chromatin at the inner plate of the kinetochore. Required for recruitment and assembly of kinetochore proteins, mitotic progression and chromosome segregation. May serve as an epigenetic mark that propagates centromere identity through replication and cell division. Not required for chromosome segregation during meiosis. The polypeptide is Histone H3-like centromeric protein cpar-1 (Caenorhabditis briggsae).